The sequence spans 318 residues: Ribonuclease Z (318 aa).

Zn(2+)-binding residues include His63, His65, Asp67, His68, His142, Asp210, and His268. Catalysis depends on Asp67, which acts as the Proton acceptor.

This sequence belongs to the RNase Z family. In terms of assembly, homodimer. Requires Zn(2+) as cofactor.

The enzyme catalyses Endonucleolytic cleavage of RNA, removing extra 3' nucleotides from tRNA precursor, generating 3' termini of tRNAs. A 3'-hydroxy group is left at the tRNA terminus and a 5'-phosphoryl group is left at the trailer molecule.. In terms of biological role, zinc phosphodiesterase, which displays some tRNA 3'-processing endonuclease activity. Probably involved in tRNA maturation, by removing a 3'-trailer from precursor tRNA. This is Ribonuclease Z from Thermobifida fusca (strain YX).